A 326-amino-acid chain; its full sequence is Lipoyl synthase (326 aa).

Positions 74, 79, 85, 100, 104, 107, and 314 each coordinate [4Fe-4S] cluster. Residues 85 to 303 form the Radical SAM core domain; that stretch reads CFGKGTATFM…EEEAYKMGFT (219 aa).

Belongs to the radical SAM superfamily. Lipoyl synthase family. [4Fe-4S] cluster is required as a cofactor.

It is found in the cytoplasm. The enzyme catalyses [[Fe-S] cluster scaffold protein carrying a second [4Fe-4S](2+) cluster] + N(6)-octanoyl-L-lysyl-[protein] + 2 oxidized [2Fe-2S]-[ferredoxin] + 2 S-adenosyl-L-methionine + 4 H(+) = [[Fe-S] cluster scaffold protein] + N(6)-[(R)-dihydrolipoyl]-L-lysyl-[protein] + 4 Fe(3+) + 2 hydrogen sulfide + 2 5'-deoxyadenosine + 2 L-methionine + 2 reduced [2Fe-2S]-[ferredoxin]. Its pathway is protein modification; protein lipoylation via endogenous pathway; protein N(6)-(lipoyl)lysine from octanoyl-[acyl-carrier-protein]: step 2/2. Functionally, catalyzes the radical-mediated insertion of two sulfur atoms into the C-6 and C-8 positions of the octanoyl moiety bound to the lipoyl domains of lipoate-dependent enzymes, thereby converting the octanoylated domains into lipoylated derivatives. The polypeptide is Lipoyl synthase (Delftia acidovorans (strain DSM 14801 / SPH-1)).